The chain runs to 271 residues: Undecaprenyl-diphosphatase (271 aa).

8 helical membrane passes run 5–25 (LLIK…LPIS), 43–63 (FATM…VYYF), 80–100 (GFNL…IGIL), 109–129 (LFSP…MIVI), 145–165 (VSTS…FPGM), 186–206 (AEFS…FELV), 215–235 (LEWE…LIVV), and 246–266 (VLKP…FLIA).

The protein belongs to the UppP family.

It is found in the cell membrane. It carries out the reaction di-trans,octa-cis-undecaprenyl diphosphate + H2O = di-trans,octa-cis-undecaprenyl phosphate + phosphate + H(+). Functionally, catalyzes the dephosphorylation of undecaprenyl diphosphate (UPP). Confers resistance to bacitracin. The chain is Undecaprenyl-diphosphatase from Caldanaerobacter subterraneus subsp. tengcongensis (strain DSM 15242 / JCM 11007 / NBRC 100824 / MB4) (Thermoanaerobacter tengcongensis).